Reading from the N-terminus, the 203-residue chain is A-type ATP synthase subunit E (203 aa).

This sequence belongs to the V-ATPase E subunit family. As to quaternary structure, has multiple subunits with at least A(3), B(3), C, D, E, F, H, I and proteolipid K(x).

It is found in the cell membrane. Component of the A-type ATP synthase that produces ATP from ADP in the presence of a proton gradient across the membrane. The chain is A-type ATP synthase subunit E from Methanococcus vannielii (strain ATCC 35089 / DSM 1224 / JCM 13029 / OCM 148 / SB).